The sequence spans 261 residues: MTHQTHAYHMVNPSPWPLTGALSALLMTSGLTMWFHFNSTILLMLGLTTNMLTMYQWWRDIIRESTFQGHHTPVVQKGLRYGMILFIISEVLFFTGFFWAFYHSSLAPTPELGGCWPPTGIHPLNPLEVPLLNTSVLLASGVSITWAHHSLMEGHRNHMLQALFITIALGVYFTLLQASEYYEAPFTISDGVYGSTFFVATGFHGLHVIIGSTFLIVCFFRQLKFHFTSSHHFGFEAAAWYWHFVDVVWLFLYVSIYWWGS.

Residues 1 to 15 (MTHQTHAYHMVNPSP) lie on the Mitochondrial matrix side of the membrane. The helical transmembrane segment at 16-34 (WPLTGALSALLMTSGLTMW) threads the bilayer. Residues 35–40 (FHFNST) lie on the Mitochondrial intermembrane side of the membrane. The helical transmembrane segment at 41-66 (ILLMLGLTTNMLTMYQWWRDIIREST) threads the bilayer. Topologically, residues 67 to 72 (FQGHHT) are mitochondrial matrix. A helical transmembrane segment spans residues 73 to 105 (PVVQKGLRYGMILFIISEVLFFTGFFWAFYHSS). Residues 106 to 128 (LAPTPELGGCWPPTGIHPLNPLE) are Mitochondrial intermembrane-facing. Residues 129–152 (VPLLNTSVLLASGVSITWAHHSLM) traverse the membrane as a helical segment. Residues 153 to 155 (EGH) lie on the Mitochondrial matrix side of the membrane. The helical transmembrane segment at 156–183 (RNHMLQALFITIALGVYFTLLQASEYYE) threads the bilayer. At 184-190 (APFTISD) the chain is on the mitochondrial intermembrane side. Residues 191 to 223 (GVYGSTFFVATGFHGLHVIIGSTFLIVCFFRQL) traverse the membrane as a helical segment. Topologically, residues 224 to 232 (KFHFTSSHH) are mitochondrial matrix. The helical transmembrane segment at 233–256 (FGFEAAAWYWHFVDVVWLFLYVSI) threads the bilayer. Over 257–261 (YWWGS) the chain is Mitochondrial intermembrane.

Belongs to the cytochrome c oxidase subunit 3 family. In terms of assembly, component of the cytochrome c oxidase (complex IV, CIV), a multisubunit enzyme composed of 14 subunits. The complex is composed of a catalytic core of 3 subunits MT-CO1, MT-CO2 and MT-CO3, encoded in the mitochondrial DNA, and 11 supernumerary subunits COX4I, COX5A, COX5B, COX6A, COX6B, COX6C, COX7A, COX7B, COX7C, COX8 and NDUFA4, which are encoded in the nuclear genome. The complex exists as a monomer or a dimer and forms supercomplexes (SCs) in the inner mitochondrial membrane with NADH-ubiquinone oxidoreductase (complex I, CI) and ubiquinol-cytochrome c oxidoreductase (cytochrome b-c1 complex, complex III, CIII), resulting in different assemblies (supercomplex SCI(1)III(2)IV(1) and megacomplex MCI(2)III(2)IV(2)).

It is found in the mitochondrion inner membrane. It catalyses the reaction 4 Fe(II)-[cytochrome c] + O2 + 8 H(+)(in) = 4 Fe(III)-[cytochrome c] + 2 H2O + 4 H(+)(out). Functionally, component of the cytochrome c oxidase, the last enzyme in the mitochondrial electron transport chain which drives oxidative phosphorylation. The respiratory chain contains 3 multisubunit complexes succinate dehydrogenase (complex II, CII), ubiquinol-cytochrome c oxidoreductase (cytochrome b-c1 complex, complex III, CIII) and cytochrome c oxidase (complex IV, CIV), that cooperate to transfer electrons derived from NADH and succinate to molecular oxygen, creating an electrochemical gradient over the inner membrane that drives transmembrane transport and the ATP synthase. Cytochrome c oxidase is the component of the respiratory chain that catalyzes the reduction of oxygen to water. Electrons originating from reduced cytochrome c in the intermembrane space (IMS) are transferred via the dinuclear copper A center (CU(A)) of subunit 2 and heme A of subunit 1 to the active site in subunit 1, a binuclear center (BNC) formed by heme A3 and copper B (CU(B)). The BNC reduces molecular oxygen to 2 water molecules using 4 electrons from cytochrome c in the IMS and 4 protons from the mitochondrial matrix. The sequence is that of Cytochrome c oxidase subunit 3 (MT-CO3) from Tragelaphus strepsiceros (Greater kudu).